A 338-amino-acid polypeptide reads, in one-letter code: MGLKINRPRRGSMGVYPRKRAADIVPRVRTWPDVNLGKPALLGFAAYKAGMLHAVVVDDRPTSPLYGKEVVKAVTVLDAPPLFVWGFRLYTLDPTNGYLRSAAEVWAGELPKHLSRVLTLPEKVDVDKQMKQVEEYRDVAVEVRALVATQPHLSGIGKKTPELLEIPIGGVPNIDERIKFAISLLGKTVSPKDVFSPGQLVDVIAVTKGKGWQGVVKRFGVTILPRWHKHRKGHRRTGTIGPQAPALMFTQPRPGQMGFHQRTEYNKRLLKIGENGAEITPKSGFPHYGVIKGPYILIQGSLPGARKRLVVLRHPARPPRRAPPTTEPQVVWVSSQQP.

2 disordered regions span residues 230–256 (HRKG…RPGQ) and 315–338 (PARP…SQQP).

Belongs to the universal ribosomal protein uL3 family. Part of the 50S ribosomal subunit. Forms a cluster with proteins L14 and L24e.

One of the primary rRNA binding proteins, it binds directly near the 3'-end of the 23S rRNA, where it nucleates assembly of the 50S subunit. This Pyrobaculum arsenaticum (strain DSM 13514 / JCM 11321 / PZ6) protein is Large ribosomal subunit protein uL3.